Consider the following 268-residue polypeptide: Energy-coupling factor transporter transmembrane protein EcfT (268 aa).

Transmembrane regions (helical) follow at residues 26–46, 47–67, 73–93, 116–136, 151–171, and 246–266; these read ILAV…LSYG, ILIG…GLLL, LWII…GEAL, LVLL…IVLT, VPAH…PTLL, and ALTG…RWGI.

It belongs to the energy-coupling factor EcfT family. Forms a stable energy-coupling factor (ECF) transporter complex composed of 2 membrane-embedded substrate-binding proteins (S component), 2 ATP-binding proteins (A component) and 2 transmembrane proteins (T component). May be able to interact with more than 1 S component at a time.

It is found in the cell membrane. Transmembrane (T) component of an energy-coupling factor (ECF) ABC-transporter complex. Unlike classic ABC transporters this ECF transporter provides the energy necessary to transport a number of different substrates. The sequence is that of Energy-coupling factor transporter transmembrane protein EcfT from Acidaminococcus fermentans (strain ATCC 25085 / DSM 20731 / CCUG 9996 / CIP 106432 / VR4).